Consider the following 166-residue polypeptide: Interferon gamma (166 aa).

Positions 1 to 23 are cleaved as a signal peptide; that stretch reads MKYTSYFLALQLCLLLGFSGSYG. Residue Q24 is modified to Pyrrolidone carboxylic acid. N-linked (GlcNAc...) asparagine glycans are attached at residues N39 and N106.

This sequence belongs to the type II (or gamma) interferon family. Homodimer. Interacts with IFNGR1 (via extracellular domain); this interaction promotes IFNGR1 dimerization. In terms of tissue distribution, released primarily from activated T lymphocytes.

The protein localises to the secreted. In terms of biological role, type II interferon produced by immune cells such as T-cells and NK cells that plays crucial roles in antimicrobial, antiviral, and antitumor responses by activating effector immune cells and enhancing antigen presentation. Primarily signals through the JAK-STAT pathway after interaction with its receptor IFNGR1 to affect gene regulation. Upon IFNG binding, IFNGR1 intracellular domain opens out to allow association of downstream signaling components JAK2, JAK1 and STAT1, leading to STAT1 activation, nuclear translocation and transcription of IFNG-regulated genes. Many of the induced genes are transcription factors such as IRF1 that are able to further drive regulation of a next wave of transcription. Plays a role in class I antigen presentation pathway by inducing a replacement of catalytic proteasome subunits with immunoproteasome subunits. In turn, increases the quantity, quality, and repertoire of peptides for class I MHC loading. Increases the efficiency of peptide generation also by inducing the expression of activator PA28 that associates with the proteasome and alters its proteolytic cleavage preference. Up-regulates as well MHC II complexes on the cell surface by promoting expression of several key molecules such as cathepsins B/CTSB, H/CTSH, and L/CTSL. Participates in the regulation of hematopoietic stem cells during development and under homeostatic conditions by affecting their development, quiescence, and differentiation. In Moschus berezovskii (Chinese forest musk deer), this protein is Interferon gamma (IFNG).